The primary structure comprises 199 residues: Holliday junction branch migration complex subunit RuvA (199 aa).

Positions 1–63 (MIGKLNGKID…EEHIHLYGFL (63 aa)) are domain I. The domain II stretch occupies residues 64 to 141 (TLEEKNFFNL…TKIFSSSAII (78 aa)). Residues 141–145 (IKDSN) form a flexible linker region. The domain III stretch occupies residues 146–199 (ISSIAINEVMKALVNLGFTRFEAQNTVQGIITQNPKISIDELIKTALKNRNSSF).

The protein belongs to the RuvA family. As to quaternary structure, homotetramer. Forms an RuvA(8)-RuvB(12)-Holliday junction (HJ) complex. HJ DNA is sandwiched between 2 RuvA tetramers; dsDNA enters through RuvA and exits via RuvB. An RuvB hexamer assembles on each DNA strand where it exits the tetramer. Each RuvB hexamer is contacted by two RuvA subunits (via domain III) on 2 adjacent RuvB subunits; this complex drives branch migration. In the full resolvosome a probable DNA-RuvA(4)-RuvB(12)-RuvC(2) complex forms which resolves the HJ.

It localises to the cytoplasm. Its function is as follows. The RuvA-RuvB-RuvC complex processes Holliday junction (HJ) DNA during genetic recombination and DNA repair, while the RuvA-RuvB complex plays an important role in the rescue of blocked DNA replication forks via replication fork reversal (RFR). RuvA specifically binds to HJ cruciform DNA, conferring on it an open structure. The RuvB hexamer acts as an ATP-dependent pump, pulling dsDNA into and through the RuvAB complex. HJ branch migration allows RuvC to scan DNA until it finds its consensus sequence, where it cleaves and resolves the cruciform DNA. The polypeptide is Holliday junction branch migration complex subunit RuvA (Rickettsia prowazekii (strain Madrid E)).